Consider the following 1117-residue polypeptide: Leucine-rich repeats and immunoglobulin-like domains protein 3 (1117 aa).

Residues 1–24 (MGAPGLRAATAALGLLLCAGLGRA) form the signal peptide. In terms of domain architecture, LRRNT spans 38–74 (LLDDDAQRPCPAACHCLGDLLDCSRRRLVRLPDPLPA). LRR repeat units lie at residues 75-98 (WVTR…SHLQ), 99-120 (SLQE…GSIS), 122-143 (NIRQ…QLEA), 146-168 (SLET…PPLQ), 169-189 (LKYL…YFDN), 193-214 (TLLV…MFKL), 216-237 (QLQH…TFQG), 240-261 (ALKS…AFWG), 264-285 (NMEV…WLYG), 288-309 (MLRE…AWEF), 312-333 (KLSE…SFLG), 336-357 (LLNA…AFRG), 360-382 (SLKT…SGAF), 387-408 (RLRQ…AFAG), and 411-432 (TLEH…AFSQ). Asparagine 156 carries an N-linked (GlcNAc...) asparagine glycan. N-linked (GlcNAc...) asparagine glycosylation occurs at asparagine 274. Residues asparagine 442 and asparagine 469 are each glycosylated (N-linked (GlcNAc...) asparagine). The region spanning 444–495 (SSLLCDCQLRWLPQWVAENNFQSFVNASCAHPQLLKGRSIFTVSPDGFVCDD) is the LRRCT domain. 3 Ig-like C2-type domains span residues 499–598 (PQIT…AKLT), 603–692 (PSFT…ATLT), and 697–783 (PSFL…VRLS). 2 disulfide bridges follow: cysteine 520-cysteine 581 and cysteine 624-cysteine 676. N-linked (GlcNAc...) asparagine glycans are attached at residues asparagine 688 and asparagine 729. Cysteine 718 and cysteine 767 are oxidised to a cystine. Residues 810–830 (VVIIAVVCCVVGTSLVWVVII) traverse the membrane as a helical segment. N-linked (GlcNAc...) asparagine glycosylation is present at asparagine 1014. Residues 1019–1093 (DFSTGPEPGS…KERTDFREEN (75 aa)) are disordered. Over residues 1083 to 1093 (DKERTDFREEN) the composition is skewed to basic and acidic residues.

In terms of assembly, interacts with EGFR, ERBB2 and ERBB4 (in vitro). Widely expressed.

Its subcellular location is the cell membrane. The protein localises to the cytoplasmic vesicle membrane. Functionally, plays a role in craniofacial and inner ear morphogenesis during embryonic development. Acts within the otic vesicle epithelium to control formation of the lateral semicircular canal in the inner ear, possibly by restricting the expression of NTN1. The sequence is that of Leucine-rich repeats and immunoglobulin-like domains protein 3 (Lrig3) from Mus musculus (Mouse).